A 1241-amino-acid polypeptide reads, in one-letter code: ATP-dependent helicase/nuclease subunit A (1241 aa).

In terms of domain architecture, UvrD-like helicase ATP-binding spans 12-485; that stretch reads SQWTDDQWKA…IDLAKNFRSR (474 aa). Residue 33 to 40 coordinates ATP; it reads AAAGSGKT. One can recognise a UvrD-like helicase C-terminal domain in the interval 505–805; sequence GEIDYDADAE…RIMTIHKSKG (301 aa).

Belongs to the helicase family. AddA subfamily. Heterodimer of AddA and AddB/RexB. Mg(2+) serves as cofactor.

It carries out the reaction Couples ATP hydrolysis with the unwinding of duplex DNA by translocating in the 3'-5' direction.. The enzyme catalyses ATP + H2O = ADP + phosphate + H(+). Functionally, the heterodimer acts as both an ATP-dependent DNA helicase and an ATP-dependent, dual-direction single-stranded exonuclease. Recognizes the chi site generating a DNA molecule suitable for the initiation of homologous recombination. The AddA nuclease domain is required for chi fragment generation; this subunit has the helicase and 3' -&gt; 5' nuclease activities. This is ATP-dependent helicase/nuclease subunit A from Bacillus cereus (strain ATCC 10987 / NRS 248).